Consider the following 87-residue polypeptide: Type 3 secretion system needle filament protein (87 aa).

This sequence belongs to the SctF family. In terms of assembly, the core secretion machinery of the T3SS is composed of approximately 20 different proteins, including cytoplasmic components, a base, an export apparatus and a needle. This subunit polymerizes and forms the helical needle filament. Forms high-order oligomers in vitro. Forms a stable ternary complex with the YscE-YscG chaperone. Interacts directly with YscG but makes very little direct contact with YscE. Interacts with the needle adapter protein YscI/SctI.

It localises to the secreted. The protein resides in the cell surface. The secretion and/or polymerization may be controlled by the type III secretion system regulator YopR. Interaction with YscE-YscG chaperone prevents premature polymerization of YscF/SctF in the bacterial cytosol and is required for its stability and efficient secretion. Interaction with the needle adapter protein YscI/SctI is required for YscF/SctF secretion, needle assembly and Yop secretion. The N-terminus varies among bacterial species, not only in amino acid composition but also in the number of amino acids, and may function in manipulating the host response to the advantage of the bacteria. In Y.pestis, the N-terminus can function to decrease cytokine induction, perhaps contributing to a favorable immune environment leading to survival of Y.pestis within the eukaryotic host. Functionally, component of the type III secretion system (T3SS), also called injectisome, which is used to inject bacterial effector proteins into eukaryotic host cells. YscF/SctF forms the external needle filament that protrudes from the bacterial surface. Essential for the calcium-dependent regulation of T3SS and Yop secretion. Required to block Yop secretion in the presence of extracellular calcium. May be the extracellular T3SS component that senses extracellular calcium and/or participates in transmitting the calcium signal to the cytoplasmic compartment where the block in secretion is initiated. In terms of biological role, during infection, can induce innate immune responses. The needle proteins interact with host TLR2 or TLR4, and induce signaling by NF-kappa-B and/or AP-1. This activation is MyD88 dependent and results in increased expression of cytokines, including TNF-alpha, IL-6 and IL-8. Innate immune responses are modulated by the N-terminal region of YscF/SctF. The chain is Type 3 secretion system needle filament protein from Yersinia pestis.